The following is a 185-amino-acid chain: MLNQIKKDAQDRMEKSLEALKGHISKIRTGRAQPSLLDAIQVEYYGAATPLRQLANVVAEDARTLAVTVFDRSLISAVEKAILTSDLGLNPSSAGTTIRVPLPPLTEERRRDLIKIVKGEGEQGKVAIRNVRRDANDKIKALLKDKEISENEQHKAEEEIQKITDIYIKKVDEVLADKEKELMDF.

This sequence belongs to the RRF family.

It is found in the cytoplasm. Its function is as follows. Responsible for the release of ribosomes from messenger RNA at the termination of protein biosynthesis. May increase the efficiency of translation by recycling ribosomes from one round of translation to another. The sequence is that of Ribosome-recycling factor from Haemophilus influenzae (strain 86-028NP).